A 141-amino-acid polypeptide reads, in one-letter code: Galactose-6-phosphate isomerase subunit LacA (141 aa).

It belongs to the LacAB/RpiB family. In terms of assembly, heteromultimeric protein consisting of LacA and LacB.

The enzyme catalyses aldehydo-D-galactose 6-phosphate = keto-D-tagatose 6-phosphate. It participates in carbohydrate metabolism; D-galactose 6-phosphate degradation; D-tagatose 6-phosphate from D-galactose 6-phosphate: step 1/1. In Streptococcus pneumoniae (strain ATCC 700669 / Spain 23F-1), this protein is Galactose-6-phosphate isomerase subunit LacA.